A 297-amino-acid chain; its full sequence is tRNA(Ile)-lysidine synthase (297 aa).

16 to 21 is an ATP binding site; that stretch reads SGGSDS.

Belongs to the tRNA(Ile)-lysidine synthase family.

The protein resides in the cytoplasm. The catalysed reaction is cytidine(34) in tRNA(Ile2) + L-lysine + ATP = lysidine(34) in tRNA(Ile2) + AMP + diphosphate + H(+). Ligates lysine onto the cytidine present at position 34 of the AUA codon-specific tRNA(Ile) that contains the anticodon CAU, in an ATP-dependent manner. Cytidine is converted to lysidine, thus changing the amino acid specificity of the tRNA from methionine to isoleucine. This is tRNA(Ile)-lysidine synthase from Mesomycoplasma hyopneumoniae (strain 232) (Mycoplasma hyopneumoniae).